The following is a 109-amino-acid chain: Nucleoid-associated protein Asuc_0997 (109 aa).

A disordered region spans residues 1-23 (MFGKGGLGGLMKQAQQMQERMQK).

Belongs to the YbaB/EbfC family. As to quaternary structure, homodimer.

Its subcellular location is the cytoplasm. It localises to the nucleoid. Its function is as follows. Binds to DNA and alters its conformation. May be involved in regulation of gene expression, nucleoid organization and DNA protection. The chain is Nucleoid-associated protein Asuc_0997 from Actinobacillus succinogenes (strain ATCC 55618 / DSM 22257 / CCUG 43843 / 130Z).